The primary structure comprises 282 residues: Shikimate kinase (282 aa).

Position 86–96 (86–96) interacts with ATP; it reads PIKSGLSSSSA.

This sequence belongs to the GHMP kinase family. Archaeal shikimate kinase subfamily.

The protein resides in the cytoplasm. It carries out the reaction shikimate + ATP = 3-phosphoshikimate + ADP + H(+). The protein operates within metabolic intermediate biosynthesis; chorismate biosynthesis; chorismate from D-erythrose 4-phosphate and phosphoenolpyruvate: step 5/7. The protein is Shikimate kinase (aroK) of Methanocaldococcus jannaschii (strain ATCC 43067 / DSM 2661 / JAL-1 / JCM 10045 / NBRC 100440) (Methanococcus jannaschii).